Consider the following 475-residue polypeptide: MDSSCLNATTKMLATAPARGNVMSTSKPLAFSIERIMARTPEPKALPVPHFLQGAVPKGDPKHSLHLNSSIPCMIPFVPVAYDTNSKAGVNGSEPRKASLEVPAPPAVAPSAPAFSCSDLLNCALSLKGDLARDALPLQQYKLVRPRVVNHSSFHAMGALCYLNRGDGPCHPAASVNIHPVASYFLSSPLHPQPKTYLAERNKLVVPAVEKLPSGVAFKDLSQAQLQHYMKESAQLLSEKIAFKTSDFSRGSPNAKPKVFTCEVCGKVFNAHYNLTRHMPVHTGARPFVCKVCGKGFRQASTLCRHKIIHTQEKPHKCNQCGKAFNRSSTLNTHTRIHAGYKPFVCEFCGKGFHQKGNYKNHKLTHSGEKQFKCNICNKAFHQVYNLTFHMHTHNDKKPFTCPTCGKGFCRNFDLKKHVRKLHDSSLGLTRTPTGEPSSDPPPQLQQPPPAPLPPLQPTLPPPGPLPSGLHQGHQ.

The short motif at 28 to 43 is the Engrailed homology 1 repressor element; the sequence is PLAFSIERIMARTPEP. 6 C2H2-type zinc fingers span residues 260-282, 288-310, 316-338, 344-366, 372-394, and 400-423; these read FTCE…MPVH, FVCK…KIIH, HKCN…TRIH, FVCE…KLTH, FKCN…MHTH, and FTCP…RKLH. The disordered stretch occupies residues 425–475; the sequence is SSLGLTRTPTGEPSSDPPPQLQQPPPAPLPPLQPTLPPPGPLPSGLHQGHQ. The segment covering 427-437 has biased composition (polar residues); the sequence is LGLTRTPTGEP. Over residues 439–466 the composition is skewed to pro residues; it reads SDPPPQLQQPPPAPLPPLQPTLPPPGPL.

This sequence belongs to the krueppel C2H2-type zinc-finger protein family.

Its subcellular location is the nucleus. Functionally, transcription repressor. Involved in the axonal projection and proper termination of olfactory sensory neurons (OSN). Plays a role in rostro-caudal patterning of the diencephalon and in prethalamic formation. Expression is required in OSN to cell-autonomously regulate OSN axon projections. Regulates non-cell-autonomously the layer formation of the olfactory bulb development and the interneurons. May be required for correct rostral migration of the interneuron progenitors. The chain is Fez family zinc finger protein 1 (Fezf1) from Mus musculus (Mouse).